A 527-amino-acid chain; its full sequence is DNA damage-binding protein cmr1 (527 aa).

Residues 35–90 (AGLFPPKSARSSPGGLTKPKKKPAPKKVKKEDEDLVPRRMSSRLRGLAADSEVAKR) are disordered. Over residues 52–62 (KPKKKPAPKKV) the composition is skewed to basic residues. WD repeat units lie at residues 185–226 (LTPE…PISA), 249–289 (PHTR…SVEK), 296–336 (SDDI…RSAV), 341–381 (LSEK…HDEP), 388–427 (VSRL…AAWK), 450–493 (GRWV…LAQL), and 496–527 (DGIT…CLWM). The tract at residues 284–303 (TTSVEKYAPESTSDDIPISG) is disordered.

It belongs to the WD repeat DDB2/WDR76 family.

In terms of biological role, DNA-binding protein that binds to both single- and double-stranded DNA. Binds preferentially to UV-damaged DNA. May be involved in DNA-metabolic processes. The sequence is that of DNA damage-binding protein cmr1 from Neosartorya fischeri (strain ATCC 1020 / DSM 3700 / CBS 544.65 / FGSC A1164 / JCM 1740 / NRRL 181 / WB 181) (Aspergillus fischerianus).